We begin with the raw amino-acid sequence, 58 residues long: UPF0391 membrane protein Maqu_2901 (58 aa).

The next 2 membrane-spanning stretches (helical) occupy residues 4 to 24 and 28 to 48; these read WAIV…GGIA and AGFA…SLVV.

Belongs to the UPF0391 family.

Its subcellular location is the cell membrane. In Marinobacter nauticus (strain ATCC 700491 / DSM 11845 / VT8) (Marinobacter aquaeolei), this protein is UPF0391 membrane protein Maqu_2901.